The primary structure comprises 438 residues: tRNA modification GTPase MnmE (438 aa).

Residues Arg-20, Glu-78, and Lys-117 each coordinate (6S)-5-formyl-5,6,7,8-tetrahydrofolate. Positions 214–359 (GIRVLIIGKP…LIDEIKKLFY (146 aa)) constitute a TrmE-type G domain. Asn-224 provides a ligand contact to K(+). Residues 224 to 229 (NVGKST), 243 to 249 (TDIPGTT), and 268 to 271 (DTAG) contribute to the GTP site. Ser-228 is a binding site for Mg(2+). Thr-243, Ile-245, and Thr-248 together coordinate K(+). Thr-249 contacts Mg(2+). Residue Lys-438 participates in (6S)-5-formyl-5,6,7,8-tetrahydrofolate binding.

This sequence belongs to the TRAFAC class TrmE-Era-EngA-EngB-Septin-like GTPase superfamily. TrmE GTPase family. As to quaternary structure, homodimer. Heterotetramer of two MnmE and two MnmG subunits. K(+) is required as a cofactor.

The protein resides in the cytoplasm. Functionally, exhibits a very high intrinsic GTPase hydrolysis rate. Involved in the addition of a carboxymethylaminomethyl (cmnm) group at the wobble position (U34) of certain tRNAs, forming tRNA-cmnm(5)s(2)U34. This is tRNA modification GTPase MnmE from Ureaplasma parvum serovar 3 (strain ATCC 27815 / 27 / NCTC 11736).